Reading from the N-terminus, the 637-residue chain is Mitochondrial Rho GTPase 1 (637 aa).

At 1–613 (MSDGETLADV…LRRVFYLSDS (613 aa)) the chain is on the cytoplasmic side. The Miro 1 domain maps to 7-184 (LADVRIVLIG…FYYAQKAVIY (178 aa)). GTP contacts are provided by residues 28–35 (SLLEDEWV), 74–78 (ISEMR), and 135–138 (LPSG). EF-hand domains lie at 200-235 (RAKK…CFGI) and 320-355 (EGVQ…CSAP). Ca(2+) contacts are provided by Asp213, Asp215, Asp217, Tyr219, Glu224, Asp333, Asp335, Asp337, Cys339, and Glu344. Residues 436–601 (RKVFQCLVVG…FEQLAMMAVY (166 aa)) form the Miro 2 domain. GTP-binding positions include 445-452 (GAKDAGKT), 482-486 (KVKEE), and 549-552 (TKVE). Residues 614 to 634 (NLLSKITFGAAIVALAGFLVL) form a helical; Anchor for type IV membrane protein membrane-spanning segment. The Mitochondrial intermembrane portion of the chain corresponds to 635-637 (KNL).

This sequence belongs to the mitochondrial Rho GTPase family.

Its subcellular location is the mitochondrion outer membrane. In terms of biological role, mitochondrial GTPase involved in mitochondrial trafficking. Probably involved in control of anterograde transport of mitochondria and their subcellular distribution. In Caenorhabditis briggsae, this protein is Mitochondrial Rho GTPase 1.